The primary structure comprises 240 residues: Ribosomal RNA small subunit methyltransferase G (240 aa).

S-adenosyl-L-methionine is bound by residues Gly-80, Phe-85, 131–132 (AE), and Arg-150.

The protein belongs to the methyltransferase superfamily. RNA methyltransferase RsmG family.

The protein localises to the cytoplasm. Its function is as follows. Specifically methylates the N7 position of a guanine in 16S rRNA. In Dictyoglomus thermophilum (strain ATCC 35947 / DSM 3960 / H-6-12), this protein is Ribosomal RNA small subunit methyltransferase G.